The chain runs to 205 residues: MTRMLLMGPPGSGKGTQATRIADKLGIVPISTGDIFRHNVKSMTPLGVEAKRYIDNGDFVPDEVTNRMVADRIAQADAEHGFLLDGYPRTKGQVEALDAMLAEAGQSLSAVVELEVPDEELVERLLKRAEIEGRADDTQEVIEHRLDLYHRETESVIQEYVERGIVARVDGTGQIDDVTERLLQAVYSVRSATGSLPVIQPGAES.

Glycine 11–threonine 16 serves as a coordination point for ATP. The segment at serine 31–valine 60 is NMP. Residues threonine 32, arginine 37, aspartate 58–valine 60, glycine 86–arginine 89, and glutamine 93 each bind AMP. The tract at residues lysine 127 to aspartate 137 is LID. Position 128 (arginine 128) interacts with ATP. 2 residues coordinate AMP: arginine 134 and arginine 145. Glycine 173 is a binding site for ATP.

This sequence belongs to the adenylate kinase family. As to quaternary structure, monomer.

The protein localises to the cytoplasm. The enzyme catalyses AMP + ATP = 2 ADP. The protein operates within purine metabolism; AMP biosynthesis via salvage pathway; AMP from ADP: step 1/1. In terms of biological role, catalyzes the reversible transfer of the terminal phosphate group between ATP and AMP. Plays an important role in cellular energy homeostasis and in adenine nucleotide metabolism. The sequence is that of Adenylate kinase from Micrococcus luteus (strain ATCC 4698 / DSM 20030 / JCM 1464 / CCM 169 / CCUG 5858 / IAM 1056 / NBRC 3333 / NCIMB 9278 / NCTC 2665 / VKM Ac-2230) (Micrococcus lysodeikticus).